Reading from the N-terminus, the 412-residue chain is Gamma-glutamyl phosphate reductase (412 aa).

Belongs to the gamma-glutamyl phosphate reductase family.

The protein resides in the cytoplasm. The enzyme catalyses L-glutamate 5-semialdehyde + phosphate + NADP(+) = L-glutamyl 5-phosphate + NADPH + H(+). It participates in amino-acid biosynthesis; L-proline biosynthesis; L-glutamate 5-semialdehyde from L-glutamate: step 2/2. Functionally, catalyzes the NADPH-dependent reduction of L-glutamate 5-phosphate into L-glutamate 5-semialdehyde and phosphate. The product spontaneously undergoes cyclization to form 1-pyrroline-5-carboxylate. The chain is Gamma-glutamyl phosphate reductase from Actinobacillus pleuropneumoniae serotype 5b (strain L20).